We begin with the raw amino-acid sequence, 946 residues long: Bifunctional glutamine synthetase adenylyltransferase/adenylyl-removing enzyme (946 aa).

Residues 1 to 441 form an adenylyl removase region; the sequence is MSLLNDAALH…EFNWVIGDDE (441 aa). The adenylyl transferase stretch occupies residues 448 to 946; sequence DQALSELWAL…VIKIWEKFLD (499 aa).

It belongs to the GlnE family. Mg(2+) is required as a cofactor.

The enzyme catalyses [glutamine synthetase]-O(4)-(5'-adenylyl)-L-tyrosine + phosphate = [glutamine synthetase]-L-tyrosine + ADP. It carries out the reaction [glutamine synthetase]-L-tyrosine + ATP = [glutamine synthetase]-O(4)-(5'-adenylyl)-L-tyrosine + diphosphate. Involved in the regulation of glutamine synthetase GlnA, a key enzyme in the process to assimilate ammonia. When cellular nitrogen levels are high, the C-terminal adenylyl transferase (AT) inactivates GlnA by covalent transfer of an adenylyl group from ATP to specific tyrosine residue of GlnA, thus reducing its activity. Conversely, when nitrogen levels are low, the N-terminal adenylyl removase (AR) activates GlnA by removing the adenylyl group by phosphorolysis, increasing its activity. The regulatory region of GlnE binds the signal transduction protein PII (GlnB) which indicates the nitrogen status of the cell. This chain is Bifunctional glutamine synthetase adenylyltransferase/adenylyl-removing enzyme, found in Psychromonas ingrahamii (strain DSM 17664 / CCUG 51855 / 37).